We begin with the raw amino-acid sequence, 411 residues long: Tyrosine--tRNA ligase (411 aa).

Residue Y34 coordinates L-tyrosine. Positions 39–48 (CTATSLHIGS) match the 'HIGH' region motif. The L-tyrosine site is built by Y171 and Q175. A 'KMSKS' region motif is present at residues 231–235 (KMGKT). An ATP-binding site is contributed by K234. Positions 345 to 411 (ISAYELFHEA…GKKKHILVRV (67 aa)) constitute an S4 RNA-binding domain.

This sequence belongs to the class-I aminoacyl-tRNA synthetase family. TyrS type 1 subfamily. In terms of assembly, homodimer.

It localises to the cytoplasm. The catalysed reaction is tRNA(Tyr) + L-tyrosine + ATP = L-tyrosyl-tRNA(Tyr) + AMP + diphosphate + H(+). Its function is as follows. Catalyzes the attachment of tyrosine to tRNA(Tyr) in a two-step reaction: tyrosine is first activated by ATP to form Tyr-AMP and then transferred to the acceptor end of tRNA(Tyr). This chain is Tyrosine--tRNA ligase, found in Rickettsia conorii (strain ATCC VR-613 / Malish 7).